The sequence spans 149 residues: Ribosome-binding factor A (149 aa).

Positions 116–125 (TLFEELHPNP) are enriched in basic and acidic residues. The tract at residues 116-149 (TLFEELHPNPEEDDGDTDAETLLEDSESGIERET) is disordered. Residues 126–143 (EEDDGDTDAETLLEDSES) are compositionally biased toward acidic residues.

The protein belongs to the RbfA family. As to quaternary structure, monomer. Binds 30S ribosomal subunits, but not 50S ribosomal subunits or 70S ribosomes.

The protein resides in the cytoplasm. Its function is as follows. One of several proteins that assist in the late maturation steps of the functional core of the 30S ribosomal subunit. Associates with free 30S ribosomal subunits (but not with 30S subunits that are part of 70S ribosomes or polysomes). Required for efficient processing of 16S rRNA. May interact with the 5'-terminal helix region of 16S rRNA. In Leptospira biflexa serovar Patoc (strain Patoc 1 / Ames), this protein is Ribosome-binding factor A.